Consider the following 381-residue polypeptide: Neuropeptide Y receptor type 2 (381 aa).

Positions M1 to D35 are disordered. At M1–V51 the chain is on the extracellular side. A glycan (N-linked (GlcNAc...) asparagine) is linked at N11. A helical membrane pass occupies residues V52–I72. Over H73 to N86 the chain is Cytoplasmic. A helical membrane pass occupies residues F87–T107. Residues L108 to H124 are Extracellular-facing. C123 and C203 form a disulfide bridge. Residues L125–A145 form a helical membrane-spanning segment. The Cytoplasmic portion of the chain corresponds to L146–S165. Residues F166–F186 form a helical membrane-spanning segment. At R187–G216 the chain is on the extracellular side. A helical membrane pass occupies residues T217–F237. At S238–K268 the chain is on the cytoplasmic side. Residues M269 to L289 traverse the membrane as a helical segment. Over A290–K304 the chain is Extracellular. The helical transmembrane segment at L305–Y325 threads the bilayer. At G326–V381 the chain is on the cytoplasmic side. A lipid anchor (S-palmitoyl cysteine) is attached at C342.

Belongs to the G-protein coupled receptor 1 family. In terms of tissue distribution, high levels in amygdala, corpus callosum, hippocampus and subthalamic nucleus. Also detectable in caudate nucleus, hypothalamus and substantia nigra.

The protein resides in the cell membrane. Receptor for neuropeptide Y and peptide YY. The rank order of affinity of this receptor for pancreatic polypeptides is PYY &gt; NPY &gt; PYY (3-36) &gt; NPY (2-36) &gt; [Ile-31, Gln-34] PP &gt; [Leu-31, Pro-34] NPY &gt; PP, [Pro-34] PYY and NPY free acid. The polypeptide is Neuropeptide Y receptor type 2 (NPY2R) (Homo sapiens (Human)).